The following is a 659-amino-acid chain: tRNA-guanine(15) transglycosylase (659 aa).

The active-site Nucleophile is D84. Substrate contacts are provided by D119 and A190. Zn(2+) contacts are provided by C273, C275, and C278. Positions 583–658 (KNRVVVNKDS…QAIKTRKGMK (76 aa)) constitute a PUA domain.

The protein belongs to the archaeosine tRNA-ribosyltransferase family. Requires Zn(2+) as cofactor.

It carries out the reaction guanosine(15) in tRNA + 7-cyano-7-deazaguanine = 7-cyano-7-carbaguanosine(15) in tRNA + guanine. It participates in tRNA modification; archaeosine-tRNA biosynthesis. Its function is as follows. Exchanges the guanine residue with 7-cyano-7-deazaguanine (preQ0) at position 15 in the dihydrouridine loop (D-loop) of archaeal tRNAs. This Methanobrevibacter smithii (strain ATCC 35061 / DSM 861 / OCM 144 / PS) protein is tRNA-guanine(15) transglycosylase.